The primary structure comprises 320 residues: tRNA U34 carboxymethyltransferase (320 aa).

Residues K89, W103, K108, G127, 177-178 (LE), M193, Y197, and R312 contribute to the carboxy-S-adenosyl-L-methionine site.

It belongs to the class I-like SAM-binding methyltransferase superfamily. CmoB family. As to quaternary structure, homotetramer.

It carries out the reaction carboxy-S-adenosyl-L-methionine + 5-hydroxyuridine(34) in tRNA = 5-carboxymethoxyuridine(34) in tRNA + S-adenosyl-L-homocysteine + H(+). Functionally, catalyzes carboxymethyl transfer from carboxy-S-adenosyl-L-methionine (Cx-SAM) to 5-hydroxyuridine (ho5U) to form 5-carboxymethoxyuridine (cmo5U) at position 34 in tRNAs. This is tRNA U34 carboxymethyltransferase from Stutzerimonas stutzeri (strain A1501) (Pseudomonas stutzeri).